The following is a 912-amino-acid chain: Protein SLFN14 (912 aa).

A required for endoribonuclease activity region spans residues 206-391 (ESTHVEFKRF…KVHKFKEALQ (186 aa)). Positions 392-571 (RHLFPVTQEE…QMGCEFFNLL (180 aa)) are required for ribosome binding. 593-600 (CFPGVRKT) serves as a coordination point for ATP.

Belongs to the Schlafen family. Subgroup III subfamily. Associates with ribosomes in an ATP-independent manner. The cofactor is Mg(2+). Mn(2+) is required as a cofactor. Expressed in megakaryocytes and platelets (at protein level). Weakly expressed in melanocytes and malignant melanoma cells.

The protein localises to the nucleus. Its function is as follows. Shows no ribosome-associated and endoribonuclease activities. In terms of biological role, displays polysome-associated endoribonuclease activity towards mRNAs and rRNAs. May play a role in RNA surveillance pathways by recognizing stalled ribosomes and triggering endonucleolytic cleavage of aberrant mRNAs. Cleaves different types of rRNAs and mRNAs in a magnesium- and manganese-dependent and ATP-independent manner. Involved in correct maturation of megakaryocytes and especially important for proplatelet extension. This chain is Protein SLFN14, found in Homo sapiens (Human).